Reading from the N-terminus, the 701-residue chain is C6 finger domain transcription factor nscR (701 aa).

Positions cysteine 17–cysteine 43 form a DNA-binding region, zn(2)-C6 fungal-type.

It is found in the nucleus. Functionally, transcription factor that specifically regulates the neosartoricin B biosynthesis gene cluster. The sequence is that of C6 finger domain transcription factor nscR from Arthroderma gypseum (strain ATCC MYA-4604 / CBS 118893) (Microsporum gypseum).